Reading from the N-terminus, the 473-residue chain is Rifampicin monooxygenase (473 aa).

4 residues coordinate FAD: threonine 12, glutamate 31, lysine 32, and arginine 41. Arginine 43 provides a ligand contact to rifampicin. Glutamine 98, valine 122, and threonine 156 together coordinate FAD. Arginine 196 contacts rifampicin. Residue aspartate 276 coordinates FAD. Position 285 (glycine 285) interacts with rifampicin. Residues leucine 289 and asparagine 290 each contribute to the FAD site.

This sequence belongs to the rifampicin monooxygenase family. As to quaternary structure, homodimer. Requires FAD as cofactor.

It catalyses the reaction rifampicin + NADPH + O2 = rifampicin para-naphthoquinone carboxamide + NADP(+) + H2O + H(+). The catalysed reaction is rifampicin + NADH + O2 = rifampicin para-naphthoquinone carboxamide + NAD(+) + H2O + H(+). Its function is as follows. Monooxygenase that can modify rifampicin, thereby inactivating its antibiotic activity. It constitutes a secondary rifampicin resistance factor. The sequence is that of Rifampicin monooxygenase from Nocardia farcinica (strain IFM 10152).